Consider the following 132-residue polypeptide: Small ribosomal subunit protein uS8 (132 aa).

Belongs to the universal ribosomal protein uS8 family. Part of the 30S ribosomal subunit. Contacts proteins S5 and S12.

Its function is as follows. One of the primary rRNA binding proteins, it binds directly to 16S rRNA central domain where it helps coordinate assembly of the platform of the 30S subunit. This is Small ribosomal subunit protein uS8 from Paracoccus denitrificans (strain Pd 1222).